Consider the following 214-residue polypeptide: LOB domain-containing protein 7 (214 aa).

Residues T12 to I113 form the LOB domain.

It belongs to the LOB domain-containing protein family.

The chain is LOB domain-containing protein 7 (LBD7) from Arabidopsis thaliana (Mouse-ear cress).